The primary structure comprises 403 residues: MAKRALLIGINYPGTTEELQGCVNDVHRMHKCLVDRFGFAEEDITVLIDTDESYTQPTGKNIRQALSELIKPAKSGDVLFVHYSGHGTRVPPETGEEDDTGFDECIVPSDLNPIPDDDFRDLVEQVPEGCQITIVSDSCHSGGLIDEAKEQIGESTTTKPNRESKVSSFEFEFKNCLHSIFVKLLAFCGIGSSHVETREIVEVGEGDEVVRSRYLPLERFIELLKQQTGQDNIEIGKIRPTLFDVFGEDSSPKIKKFMKVILTKLRKTNDQSTLLGKIEESARGYIEETLNDEHYMKPAMQAQVKSDREIYGGRSSNGLFPDRGILLSGCQTDETSADVKKKGEAFGAFSNAIQMVLSETDHKDKITNKEMVLRAREILKKQMFIQRPGLYCNDRFVNAPFIC.

Residues histidine 86 and cysteine 139 contribute to the active site. Cysteine 139 is subject to S-nitrosocysteine.

The protein belongs to the peptidase C14B family. In terms of processing, proteolytically processed; by an autocatalytic mechanism. Expressed in roots, flowers and siliques.

This Arabidopsis thaliana (Mouse-ear cress) protein is Metacaspase-7 (AMC7).